Here is a 274-residue protein sequence, read N- to C-terminus: Thiamine kinase (274 aa).

This sequence belongs to the thiamine kinase family.

It carries out the reaction thiamine + ATP = thiamine phosphate + ADP + H(+). Its pathway is cofactor biosynthesis; thiamine diphosphate biosynthesis; thiamine phosphate from thiamine: step 1/1. Functionally, catalyzes the ATP-dependent phosphorylation of thiamine to thiamine phosphate. Is involved in thiamine salvage. The protein is Thiamine kinase of Escherichia coli (strain K12 / MC4100 / BW2952).